A 478-amino-acid polypeptide reads, in one-letter code: MKTLPTLLLLCVALCSAYPLDGASRDADTTNMDLLQQYLENYYNLEKDVKQFVKRKDSSPVVKKIQEMQKFLGLEVTGKLDSNTLEVIRKPRCGVPDVGHFSTFPGTPKWTKTHLTYRIVNYTPDLPRDAVDAAIEKALKVWEEVTPLTFSRKYEGEADIMISFGVREHGDFIPFDGPGNVLAHAYAPGPGINGDAHFDDDEQWTKDTTGTNLFLVAAHELGHSLGLFHSANPEALMYPVYNAFTDLARFRLSQDDVDGIQSLYGPAPASPDNSGVPMEPVPPGSGTPVMCDPDLSFDAISTLRGEILFFKDRYFWRKSLRILEPEFHLISSFWPSLPSAVDAAYEVISRDTVFIFKGTQFWAIRGNEVQAGYPRSIHTLGFPSTIRKIDAAISDKERKKTYFFVEDKYWRFDEKRQSLEPGFPRHIAEDFPGINPKIDAVFEAFGFFYFFSGSSQSEFDPNAKKVTHVLKSNSWFQC.

The N-terminal stretch at 1–17 is a signal peptide; that stretch reads MKTLPTLLLLCVALCSA. The propeptide at 18-100 is activation peptide; it reads YPLDGASRDA…PRCGVPDVGH (83 aa). The Cysteine switch motif lies at 91 to 98; it reads PRCGVPDV. Zn(2+) is bound at residue C93. The Ca(2+) site is built by D125 and D159. The Zn(2+) site is built by H169 and D171. Ca(2+) is bound by residues D176, G177, G179, and V181. A Zn(2+)-binding site is contributed by H184. Residues G191, N193, and D195 each contribute to the Ca(2+) site. H197 contacts Zn(2+). 3 residues coordinate Ca(2+): D199, D200, and E202. Position 219 (H219) interacts with Zn(2+). Residue E220 is part of the active site. Positions 223 and 229 each coordinate Zn(2+). Hemopexin repeat units follow at residues 288–337, 338–384, 386–434, and 435–478; these read PVMC…WPSL, PSAV…GFPS, IRKI…FPGI, and NPKI…WFQC. Cysteines 291 and 478 form a disulfide. Residue D298 coordinates Ca(2+). 2 residues coordinate Ca(2+): D390 and D439.

It belongs to the peptidase M10A family. It depends on Ca(2+) as a cofactor. Zn(2+) serves as cofactor.

The protein resides in the secreted. It is found in the extracellular space. It localises to the extracellular matrix. It catalyses the reaction Preferential cleavage where P1', P2' and P3' are hydrophobic residues.. Metalloproteinase with a rather broad substrate specificity that can degrade fibronectin, laminin, gelatins of type I, III, IV, and V; collagens III, IV, X, and IX, and cartilage proteoglycans. Activates different molecules including growth factors, plasminogen or other matrix metalloproteinases such as MMP9. Once released into the extracellular matrix (ECM), the inactive pro-enzyme is activated by the plasmin cascade signaling pathway. Also acts intracellularly. For example, in dopaminergic neurons, gets activated by the serine protease HTRA2 upon stress and plays a pivotal role in DA neuronal degeneration by mediating microglial activation and alpha-synuclein/SNCA cleavage. In addition, plays a role in immune response and possesses antiviral activity against various viruses. Mechanistically, translocates from the cytoplasm into the cell nucleus upon virus infection to influence NF-kappa-B activities. The chain is Stromelysin-1 (MMP3) from Oryctolagus cuniculus (Rabbit).